Reading from the N-terminus, the 146-residue chain is Large ribosomal subunit protein uL14 (146 aa).

The protein belongs to the universal ribosomal protein uL14 family.

In Encephalitozoon cuniculi (strain GB-M1) (Microsporidian parasite), this protein is Large ribosomal subunit protein uL14 (RPL23).